Reading from the N-terminus, the 378-residue chain is Tetraacyldisaccharide 4'-kinase (378 aa).

Alanine 63–threonine 70 is an ATP binding site.

Belongs to the LpxK family.

The enzyme catalyses a lipid A disaccharide + ATP = a lipid IVA + ADP + H(+). It participates in glycolipid biosynthesis; lipid IV(A) biosynthesis; lipid IV(A) from (3R)-3-hydroxytetradecanoyl-[acyl-carrier-protein] and UDP-N-acetyl-alpha-D-glucosamine: step 6/6. Its function is as follows. Transfers the gamma-phosphate of ATP to the 4'-position of a tetraacyldisaccharide 1-phosphate intermediate (termed DS-1-P) to form tetraacyldisaccharide 1,4'-bis-phosphate (lipid IVA). The protein is Tetraacyldisaccharide 4'-kinase of Anaeromyxobacter sp. (strain K).